A 90-amino-acid chain; its full sequence is Small ribosomal subunit protein uS15c (90 aa).

This sequence belongs to the universal ribosomal protein uS15 family. Part of the 30S ribosomal subunit.

The protein resides in the plastid. Its subcellular location is the chloroplast. This Brachypodium distachyon (Purple false brome) protein is Small ribosomal subunit protein uS15c (rps15-A).